Here is a 68-residue protein sequence, read N- to C-terminus: Phosphatidylinositol N-acetylglucosaminyltransferase ERI1 subunit (68 aa).

2 helical membrane-spanning segments follow: residues 8 to 28 and 34 to 54; these read FLVL…FYWL and FLHY…WALI.

In terms of assembly, component of the phosphatidylinositol N-acetylglucosaminyltransferase (GPI-GlcNAc transferase) complex composed of at least GPI1, GPI2, GPI3, GPI15, GPI19 and ERI1. Interacts with GPI2. Interacts with GTP-bound RAS2 in an effector loop-dependent manner.

Its subcellular location is the endoplasmic reticulum membrane. It participates in glycolipid biosynthesis; glycosylphosphatidylinositol-anchor biosynthesis. Its function is as follows. Probable component of the GPI-GlcNAc transferase (GPI-GnT) complex in the endoplasmic reticulum, a complex that catalyzes transfer of GlcNAc from UDP-GlcNAc to an acceptor phosphatidylinositol, the first step in the production of GPI-anchors for cell surface proteins. Ras may inhibit the enzyme activity of the GPI-GnT complex via the association between ERI1 and RAS2. The protein is Phosphatidylinositol N-acetylglucosaminyltransferase ERI1 subunit (ERI1) of Saccharomyces cerevisiae (strain ATCC 204508 / S288c) (Baker's yeast).